The sequence spans 234 residues: Phosphoribosylaminoimidazole-succinocarboxamide synthase (234 aa).

This sequence belongs to the SAICAR synthetase family.

The enzyme catalyses 5-amino-1-(5-phospho-D-ribosyl)imidazole-4-carboxylate + L-aspartate + ATP = (2S)-2-[5-amino-1-(5-phospho-beta-D-ribosyl)imidazole-4-carboxamido]succinate + ADP + phosphate + 2 H(+). The protein operates within purine metabolism; IMP biosynthesis via de novo pathway; 5-amino-1-(5-phospho-D-ribosyl)imidazole-4-carboxamide from 5-amino-1-(5-phospho-D-ribosyl)imidazole-4-carboxylate: step 1/2. The sequence is that of Phosphoribosylaminoimidazole-succinocarboxamide synthase from Pyrobaculum aerophilum (strain ATCC 51768 / DSM 7523 / JCM 9630 / CIP 104966 / NBRC 100827 / IM2).